Here is a 62-residue protein sequence, read N- to C-terminus: UPF0434 protein FTM_0733 (62 aa).

The protein belongs to the UPF0434 family.

In Francisella tularensis subsp. mediasiatica (strain FSC147), this protein is UPF0434 protein FTM_0733.